The following is a 348-amino-acid chain: Elongation factor Ts (348 aa).

The segment at 82-85 is involved in Mg(2+) ion dislocation from EF-Tu; sequence TDFV.

Belongs to the EF-Ts family.

The protein resides in the cytoplasm. In terms of biological role, associates with the EF-Tu.GDP complex and induces the exchange of GDP to GTP. It remains bound to the aminoacyl-tRNA.EF-Tu.GTP complex up to the GTP hydrolysis stage on the ribosome. This chain is Elongation factor Ts, found in Aliarcobacter butzleri (strain RM4018) (Arcobacter butzleri).